Reading from the N-terminus, the 208-residue chain is Large ribosomal subunit protein uL3 (208 aa).

Residues 134–159 (SKFHREAGSTGHCTTPGRSFKNTTMP) form a disordered region. Over residues 144-158 (GHCTTPGRSFKNTTM) the composition is skewed to polar residues.

The protein belongs to the universal ribosomal protein uL3 family. As to quaternary structure, part of the 50S ribosomal subunit. Forms a cluster with proteins L14 and L19.

Functionally, one of the primary rRNA binding proteins, it binds directly near the 3'-end of the 23S rRNA, where it nucleates assembly of the 50S subunit. In Treponema denticola (strain ATCC 35405 / DSM 14222 / CIP 103919 / JCM 8153 / KCTC 15104), this protein is Large ribosomal subunit protein uL3.